Reading from the N-terminus, the 166-residue chain is Putative pre-16S rRNA nuclease (166 aa).

The tract at residues 1–24 is disordered; that stretch reads MPDTAAPTPDRPGPDDPGRGRRLG.

This sequence belongs to the YqgF nuclease family.

It localises to the cytoplasm. Could be a nuclease involved in processing of the 5'-end of pre-16S rRNA. The protein is Putative pre-16S rRNA nuclease of Mycobacteroides abscessus (strain ATCC 19977 / DSM 44196 / CCUG 20993 / CIP 104536 / JCM 13569 / NCTC 13031 / TMC 1543 / L948) (Mycobacterium abscessus).